The sequence spans 187 residues: UPF0669 protein C6orf120 homolog (187 aa).

The first 23 residues, 1–23 (MVEYWKRNFFMVLVLQAFYLANC), serve as a signal peptide directing secretion. Asn47 carries an N-linked (GlcNAc...) asparagine glycan.

Belongs to the UPF0669 family.

The protein resides in the secreted. The sequence is that of UPF0669 protein C6orf120 homolog from Xenopus tropicalis (Western clawed frog).